The following is a 312-amino-acid chain: Aspartate carbamoyltransferase catalytic subunit (312 aa).

The carbamoyl phosphate site is built by arginine 58 and threonine 59. Lysine 86 contributes to the L-aspartate binding site. 3 residues coordinate carbamoyl phosphate: arginine 108, histidine 136, and glutamine 139. The L-aspartate site is built by arginine 169 and arginine 223. The carbamoyl phosphate site is built by glycine 264 and proline 265.

The protein belongs to the aspartate/ornithine carbamoyltransferase superfamily. ATCase family. Heterododecamer (2C3:3R2) of six catalytic PyrB chains organized as two trimers (C3), and six regulatory PyrI chains organized as three dimers (R2).

The catalysed reaction is carbamoyl phosphate + L-aspartate = N-carbamoyl-L-aspartate + phosphate + H(+). The protein operates within pyrimidine metabolism; UMP biosynthesis via de novo pathway; (S)-dihydroorotate from bicarbonate: step 2/3. Catalyzes the condensation of carbamoyl phosphate and aspartate to form carbamoyl aspartate and inorganic phosphate, the committed step in the de novo pyrimidine nucleotide biosynthesis pathway. This Syntrophomonas wolfei subsp. wolfei (strain DSM 2245B / Goettingen) protein is Aspartate carbamoyltransferase catalytic subunit.